The sequence spans 231 residues: ATP phosphoribosyltransferase (231 aa).

It belongs to the ATP phosphoribosyltransferase family. Short subfamily. In terms of assembly, heteromultimer composed of HisG and HisZ subunits.

The protein localises to the cytoplasm. It catalyses the reaction 1-(5-phospho-beta-D-ribosyl)-ATP + diphosphate = 5-phospho-alpha-D-ribose 1-diphosphate + ATP. It functions in the pathway amino-acid biosynthesis; L-histidine biosynthesis; L-histidine from 5-phospho-alpha-D-ribose 1-diphosphate: step 1/9. Its function is as follows. Catalyzes the condensation of ATP and 5-phosphoribose 1-diphosphate to form N'-(5'-phosphoribosyl)-ATP (PR-ATP). Has a crucial role in the pathway because the rate of histidine biosynthesis seems to be controlled primarily by regulation of HisG enzymatic activity. The protein is ATP phosphoribosyltransferase of Brucella anthropi (strain ATCC 49188 / DSM 6882 / CCUG 24695 / JCM 21032 / LMG 3331 / NBRC 15819 / NCTC 12168 / Alc 37) (Ochrobactrum anthropi).